A 397-amino-acid chain; its full sequence is Na(+)/H(+) antiporter NhaA (397 aa).

Helical transmembrane passes span 14-34, 36-56, 59-79, 95-115, 125-145, 154-174, 177-197, 204-224, 254-274, 292-312, 328-348, and 365-385; these read ASGI…NTPL, DLYF…FSIY, LLMW…GLEV, IFPA…FTLI, GWAI…GLLG, IFLL…IAIF, HELS…LIIM, AICA…KSGV, LLAP…NAGV, VALG…FLAV, IFAV…LAGL, and LGIL…LKLC.

Belongs to the NhaA Na(+)/H(+) (TC 2.A.33) antiporter family.

It localises to the cell inner membrane. The catalysed reaction is Na(+)(in) + 2 H(+)(out) = Na(+)(out) + 2 H(+)(in). In terms of biological role, na(+)/H(+) antiporter that extrudes sodium in exchange for external protons. This is Na(+)/H(+) antiporter NhaA from Glaesserella parasuis serovar 5 (strain SH0165) (Haemophilus parasuis).